The chain runs to 415 residues: Serine hydroxymethyltransferase (415 aa).

(6S)-5,6,7,8-tetrahydrofolate-binding positions include Leu-119 and 123–125 (GHL). The residue at position 228 (Lys-228) is an N6-(pyridoxal phosphate)lysine.

The protein belongs to the SHMT family. As to quaternary structure, homodimer. It depends on pyridoxal 5'-phosphate as a cofactor.

It localises to the cytoplasm. The catalysed reaction is (6R)-5,10-methylene-5,6,7,8-tetrahydrofolate + glycine + H2O = (6S)-5,6,7,8-tetrahydrofolate + L-serine. It functions in the pathway one-carbon metabolism; tetrahydrofolate interconversion. Its pathway is amino-acid biosynthesis; glycine biosynthesis; glycine from L-serine: step 1/1. Its function is as follows. Catalyzes the reversible interconversion of serine and glycine with tetrahydrofolate (THF) serving as the one-carbon carrier. This reaction serves as the major source of one-carbon groups required for the biosynthesis of purines, thymidylate, methionine, and other important biomolecules. Also exhibits THF-independent aldolase activity toward beta-hydroxyamino acids, producing glycine and aldehydes, via a retro-aldol mechanism. The polypeptide is Serine hydroxymethyltransferase (Coprothermobacter proteolyticus (strain ATCC 35245 / DSM 5265 / OCM 4 / BT)).